A 246-amino-acid chain; its full sequence is Metallo-beta-lactamase IMP-1 (246 aa).

Residues 1-18 (MSKLSVFFIFLFCSIATA) form the signal peptide. Zn(2+) is bound by residues His95, His97, Asp99, His157, and Cys176. A beta-lactam-binding residues include Lys179 and Asn185. Zn(2+) is bound at residue His215.

It belongs to the metallo-beta-lactamase superfamily. Class-B beta-lactamase family. In terms of assembly, monomer. It depends on Zn(2+) as a cofactor.

Its subcellular location is the periplasm. The enzyme catalyses a beta-lactam + H2O = a substituted beta-amino acid. With respect to regulation, inhibited by captopril stereoisomers, Hg(2+), Fe(2+), Cu(2+), chelating agents such as EDTA, dansyl derivatives, including dansyl-C4SH, bisthiazolidines, mercaptoacetic acid and by PMPC phosphonates. Inhibited by 3-(3-mercaptopropionylsulfanyl)-propionic acid pentafluorophenyl ester, via a covalent binding to Lys-179. Not susceptible to inactivation by the beta-lactamase-blocking agents clavulanic acid or cloxacillin. In terms of biological role, class B beta-lactamase which confers resistance to the beta-lactam antibiotics, including penicillins, cephalosporins and carbapenems. Acts via hydrolysis of the beta-lactam ring. Has penicillin-, cephalosporin- and carbapenem-hydrolyzing activities. Has endoribonuclease activity, cleaving substrate RNAs preferentially between U/C and A, in vitro. The protein is Metallo-beta-lactamase IMP-1 of Serratia marcescens.